The following is a 280-amino-acid chain: 2-dehydro-3-deoxyphosphooctonate aldolase (280 aa).

This sequence belongs to the KdsA family.

Its subcellular location is the cytoplasm. The catalysed reaction is D-arabinose 5-phosphate + phosphoenolpyruvate + H2O = 3-deoxy-alpha-D-manno-2-octulosonate-8-phosphate + phosphate. It functions in the pathway carbohydrate biosynthesis; 3-deoxy-D-manno-octulosonate biosynthesis; 3-deoxy-D-manno-octulosonate from D-ribulose 5-phosphate: step 2/3. Its pathway is bacterial outer membrane biogenesis; lipopolysaccharide biosynthesis. This chain is 2-dehydro-3-deoxyphosphooctonate aldolase, found in Desulfotalea psychrophila (strain LSv54 / DSM 12343).